A 423-amino-acid chain; its full sequence is MFDKNMTIAGYDDALADAMNAEAQRQEDHIELIASENYTSPRVMEAQGSVLTNKYAEGYPNKRYYGGCEHVDVVEQLAIDRAKELFGADYANVQPHSGSQANAPVYMALLEPGDTVLGMSLAHGGHLTHGSHVSFSGKMYNAVQYGLNPETGVIDYDEVERLAKEHKPKMIIAGFSAYSQVVDWQKFREIADAVGAYLMVDMAHVAGLVAAGEYPNPVQIADVTTTTTHKTLRGPRSGLILAKSNPEIEKKLNSAIFPGAQGGPLMHVIAAKAVAFKEAMEPEFKTYAKQVKVNAKAMADVFMARGFDVVSKGTENHLFLVSFIEQGLTGKLVDAALGEAHITINKNSVPNDPMSPFVTSGIRVGTAASTTRGFTEEDSKNLASWMCDVIDSCQQASESWDEKVVADVREKVKALCAARPVYK.

(6S)-5,6,7,8-tetrahydrofolate-binding positions include Leu-121 and 125 to 127 (GHL). The residue at position 230 (Lys-230) is an N6-(pyridoxal phosphate)lysine. 355–357 (SPF) contributes to the (6S)-5,6,7,8-tetrahydrofolate binding site.

It belongs to the SHMT family. In terms of assembly, homodimer. Requires pyridoxal 5'-phosphate as cofactor.

It is found in the cytoplasm. It catalyses the reaction (6R)-5,10-methylene-5,6,7,8-tetrahydrofolate + glycine + H2O = (6S)-5,6,7,8-tetrahydrofolate + L-serine. The protein operates within one-carbon metabolism; tetrahydrofolate interconversion. It functions in the pathway amino-acid biosynthesis; glycine biosynthesis; glycine from L-serine: step 1/1. Functionally, catalyzes the reversible interconversion of serine and glycine with tetrahydrofolate (THF) serving as the one-carbon carrier. This reaction serves as the major source of one-carbon groups required for the biosynthesis of purines, thymidylate, methionine, and other important biomolecules. Also exhibits THF-independent aldolase activity toward beta-hydroxyamino acids, producing glycine and aldehydes, via a retro-aldol mechanism. The chain is Serine hydroxymethyltransferase from Hydrogenovibrio crunogenus (strain DSM 25203 / XCL-2) (Thiomicrospira crunogena).